Reading from the N-terminus, the 762-residue chain is Probable inorganic carbon transporter subunit DabA (762 aa).

Zn(2+) contacts are provided by Cys279, Asp281, His461, and Cys476.

Belongs to the inorganic carbon transporter (TC 9.A.2) DabA family. As to quaternary structure, forms a complex with DabB. Zn(2+) serves as cofactor.

It localises to the cell inner membrane. Its function is as follows. Part of an energy-coupled inorganic carbon pump. The chain is Probable inorganic carbon transporter subunit DabA from Legionella pneumophila (strain Lens).